We begin with the raw amino-acid sequence, 63 residues long: MDPQDCTCAAGDSCSCAGSCKCKNCRCQSCRKSCCSCCPASCSNCAKGCVCKEPSSSKCSCCH.

Residues 1 to 30 (MDPQDCTCAAGDSCSCAGSCKCKNCRCQSC) form a beta region. Positions 6, 8, 14, 16, 20, 22, 25, 27, 30, 34, 35, 37, 38, 42, 45, 49, 51, 59, 61, and 62 each coordinate a divalent metal cation. Positions 31-63 (RKSCCSCCPASCSNCAKGCVCKEPSSSKCSCCH) are alpha.

The protein belongs to the metallothionein superfamily. Type 1 family.

In terms of biological role, metallothioneins have a high content of cysteine residues that bind various heavy metals. In Columba livia (Rock dove), this protein is Metallothionein-2.